The chain runs to 22 residues: Chymotrypsin inhibitor (22 aa).

The disordered stretch occupies residues 1–22 (FDESFGFQGPSTYEKTPLGEPA).

In terms of tissue distribution, hemolymph.

It localises to the secreted. The protein localises to the extracellular space. Its function is as follows. Inhibits chymotrypsin stoichiometrically. Also inhibits porcine pancreatic elastase and trypsin. The polypeptide is Chymotrypsin inhibitor (Mythimna unipuncta (Armyworm moth)).